Reading from the N-terminus, the 216-residue chain is Acyl-homoserine-lactone synthase (216 aa).

This sequence belongs to the autoinducer synthase family.

The enzyme catalyses a fatty acyl-[ACP] + S-adenosyl-L-methionine = an N-acyl-L-homoserine lactone + S-methyl-5'-thioadenosine + holo-[ACP] + H(+). Functionally, required for the synthesis of OHHL (N-(3-oxohexanoyl)-L-homoserine lactone), an autoinducer molecule which binds to CarR and thus acts in the control of the biosynthesis of carbapenem antibiotics. In Pectobacterium carotovorum subsp. carotovorum (Erwinia carotovora subsp. carotovora), this protein is Acyl-homoserine-lactone synthase (carI).